The sequence spans 248 residues: Metallo-beta-lactamase type 2 (248 aa).

An N-terminal signal peptide occupies residues 1 to 21 (MKGLKGLLVLALGFTGLQVFG). Residues histidine 97, histidine 99, aspartate 101, histidine 160, and cysteine 179 each coordinate Zn(2+). Substrate is bound at residue lysine 182. Histidine 221 serves as a coordination point for Zn(2+).

Belongs to the metallo-beta-lactamase superfamily. Class-B beta-lactamase family. Monomer. Zn(2+) is required as a cofactor.

The protein resides in the periplasm. The enzyme catalyses a beta-lactam + H2O = a substituted beta-amino acid. Its function is as follows. Confers resistance to the different beta-lactams antibiotics (penicillin, cephalosporin and carbapenem) via the hydrolysis of the beta-lactam ring. The chain is Metallo-beta-lactamase type 2 (blaB8) from Elizabethkingia meningoseptica (Chryseobacterium meningosepticum).